The primary structure comprises 723 residues: Malate synthase G (723 aa).

Acetyl-CoA contacts are provided by residues Val-118, 125 to 126 (RY), Ser-274, and Arg-311. Residue Arg-338 is the Proton acceptor of the active site. Glyoxylate is bound by residues Arg-338, Glu-427, and 452-455 (GFLD). Mg(2+) contacts are provided by Glu-427 and Asp-455. Pro-536 lines the acetyl-CoA pocket. Residue Cys-617 is modified to Cysteine sulfenic acid (-SOH). Asp-631 acts as the Proton donor in catalysis. At Cys-688 the chain carries Cysteine sulfenic acid (-SOH).

Belongs to the malate synthase family. GlcB subfamily. In terms of assembly, monomer. The cofactor is Mg(2+).

The protein localises to the cytoplasm. The enzyme catalyses glyoxylate + acetyl-CoA + H2O = (S)-malate + CoA + H(+). The protein operates within carbohydrate metabolism; glyoxylate cycle; (S)-malate from isocitrate: step 2/2. In terms of biological role, involved in the glycolate utilization. Catalyzes the condensation and subsequent hydrolysis of acetyl-coenzyme A (acetyl-CoA) and glyoxylate to form malate and CoA. This Shigella flexneri protein is Malate synthase G.